A 203-amino-acid polypeptide reads, in one-letter code: Small ribosomal subunit protein uS5 (203 aa).

Residues 1–18 (MENNVKKETIVDSEKVEK) show a composition bias toward basic and acidic residues. The interval 1-36 (MENNVKKETIVDSEKVEKQQPVTAPVVNKKENTQPK) is disordered. The S5 DRBM domain occupies 49 to 112 (FEERVVKIKR…KNANNNLIKV (64 aa)).

The protein belongs to the universal ribosomal protein uS5 family. Part of the 30S ribosomal subunit. Contacts proteins S4 and S8.

In terms of biological role, with S4 and S12 plays an important role in translational accuracy. Located at the back of the 30S subunit body where it stabilizes the conformation of the head with respect to the body. In Ureaplasma urealyticum serovar 10 (strain ATCC 33699 / Western), this protein is Small ribosomal subunit protein uS5.